The primary structure comprises 350 residues: Biotin synthase (350 aa).

Residues 38–256 (NHVQVSTLLS…IAIARIMMPQ (219 aa)) form the Radical SAM core domain. Residues Cys-53, Cys-57, and Cys-60 each contribute to the [4Fe-4S] cluster site. 4 residues coordinate [2Fe-2S] cluster: Cys-97, Cys-128, Cys-188, and Arg-260.

Belongs to the radical SAM superfamily. Biotin synthase family. Homodimer. [4Fe-4S] cluster serves as cofactor. Requires [2Fe-2S] cluster as cofactor.

It carries out the reaction (4R,5S)-dethiobiotin + (sulfur carrier)-SH + 2 reduced [2Fe-2S]-[ferredoxin] + 2 S-adenosyl-L-methionine = (sulfur carrier)-H + biotin + 2 5'-deoxyadenosine + 2 L-methionine + 2 oxidized [2Fe-2S]-[ferredoxin]. The protein operates within cofactor biosynthesis; biotin biosynthesis; biotin from 7,8-diaminononanoate: step 2/2. Catalyzes the conversion of dethiobiotin (DTB) to biotin by the insertion of a sulfur atom into dethiobiotin via a radical-based mechanism. The sequence is that of Biotin synthase from Vibrio parahaemolyticus serotype O3:K6 (strain RIMD 2210633).